We begin with the raw amino-acid sequence, 182 residues long: NADH-quinone oxidoreductase subunit 9 (182 aa).

2 consecutive 4Fe-4S ferredoxin-type domains span residues 43–73 (LTRH…VEPA) and 89–118 (KVYE…LGYD). Cys53, Cys56, Ser57, Cys59, Cys63, Cys98, Ile99, Cys101, Cys104, and Cys108 together coordinate [4Fe-4S] cluster.

It belongs to the complex I 23 kDa subunit family. NDH-1 is composed of 15 different subunits, Nqo1 to Nqo15. The complex has a L-shaped structure, with the hydrophobic arm (subunits Nqo7, Nqo8 and Nqo10 to Nqo14) embedded in the membrane and the hydrophilic peripheral arm (subunits Nqo1 to Nqo6, Nqo9 and Nqo15) protruding into the bacterial cytoplasm. The hydrophilic domain contains all the redox centers. It depends on [4Fe-4S] cluster as a cofactor.

It is found in the cell membrane. It catalyses the reaction a quinone + NADH + 5 H(+)(in) = a quinol + NAD(+) + 4 H(+)(out). In terms of biological role, NDH-1 shuttles electrons from NADH, via FMN and iron-sulfur (Fe-S) centers, to quinones in the respiratory chain. The immediate electron acceptor for the enzyme in this species is menaquinone. Couples the redox reaction to proton translocation (for every two electrons transferred, four hydrogen ions are translocated across the cytoplasmic membrane), and thus conserves the redox energy in a proton gradient required for the synthesis of ATP. The role of the Nqo9 subunit appears to provide a 'connecting chain' of two clusters between cluster N5 and the terminal cluster N2, and to stabilize the structure of the complex by interacting with other subunits. This is NADH-quinone oxidoreductase subunit 9 (nqo9) from Thermus thermophilus (strain ATCC 27634 / DSM 579 / HB8).